A 154-amino-acid polypeptide reads, in one-letter code: Ribonuclease HI (154 aa).

The region spanning 1–142 (MQKQIEIFTD…CDQLAKAGAE (142 aa)) is the RNase H type-1 domain. Mg(2+) contacts are provided by D10, E48, D70, and D134.

This sequence belongs to the RNase H family. In terms of assembly, monomer. Mg(2+) is required as a cofactor.

The protein resides in the cytoplasm. It catalyses the reaction Endonucleolytic cleavage to 5'-phosphomonoester.. Its function is as follows. Endonuclease that specifically degrades the RNA of RNA-DNA hybrids. This chain is Ribonuclease HI (rnhA), found in Pasteurella multocida (strain Pm70).